The chain runs to 330 residues: NADH-quinone oxidoreductase subunit H (330 aa).

The next 8 helical transmembrane spans lie at 5 to 25 (LLTL…VLTL), 78 to 98 (WVFM…FAVI), 120 to 140 (IGLL…ALGG), 155 to 175 (AMAQ…PVVM), 191 to 211 (SLPN…AIMA), 243 to 263 (FFVG…VLFL), 271 to 291 (LPGI…FIWV), and 308 to 328 (WKIL…WLIW).

It belongs to the complex I subunit 1 family. NDH-1 is composed of 14 different subunits. Subunits NuoA, H, J, K, L, M, N constitute the membrane sector of the complex.

It localises to the cell inner membrane. The catalysed reaction is a quinone + NADH + 5 H(+)(in) = a quinol + NAD(+) + 4 H(+)(out). Functionally, NDH-1 shuttles electrons from NADH, via FMN and iron-sulfur (Fe-S) centers, to quinones in the respiratory chain. The immediate electron acceptor for the enzyme in this species is believed to be ubiquinone. Couples the redox reaction to proton translocation (for every two electrons transferred, four hydrogen ions are translocated across the cytoplasmic membrane), and thus conserves the redox energy in a proton gradient. This subunit may bind ubiquinone. This is NADH-quinone oxidoreductase subunit H from Syntrophotalea carbinolica (strain DSM 2380 / NBRC 103641 / GraBd1) (Pelobacter carbinolicus).